The primary structure comprises 153 residues: D-amino acid oxidase regulator (153 aa).

The interval 1-25 is involved in targeting to the mitochondrion; sequence MLEKLMGADSLQLFRSRYTLGKIYF. The interaction with DAO stretch occupies residues 138–153; it reads KDQSCNHKEITSTKAE.

As to quaternary structure, interacts with DAO (D-amino acid oxidase); the interaction is direct, can occur in the presence or absence of FAD or substrate bound to DAO, and results in a complex containing two DAO homodimers and two DAOA monomers. Interacts with DDO (D-aspartate oxidase); the interaction is direct. Interacts wih SOD1; the interaction is direct. Interacts with MSRB2; the interaction is direct. In terms of tissue distribution, expressed in the amygdala and in astrocytes of the cortex (at protein level). Expressed in the caudate nucleus, spinal cord and testis.

The protein localises to the cytoplasm. It localises to the cytosol. The protein resides in the golgi apparatus. It is found in the mitochondrion. Functionally, may suppress DAO (D-amino acid oxidase) and SOD1 activity and promote their degradation. Has conversely also been suggested to function as a DAO activator. May stimulate the degradation of DDO (D-aspartate oxidase). May play a role in mitochondrial fission. The chain is D-amino acid oxidase regulator (DAOA) from Homo sapiens (Human).